Reading from the N-terminus, the 156-residue chain is ATP synthase subunit b (156 aa).

Residues 7-29 form a helical membrane-spanning segment; it reads LIGQLIAFALFTWFCVKFVWPPI.

The protein belongs to the ATPase B chain family. In terms of assembly, F-type ATPases have 2 components, F(1) - the catalytic core - and F(0) - the membrane proton channel. F(1) has five subunits: alpha(3), beta(3), gamma(1), delta(1), epsilon(1). F(0) has three main subunits: a(1), b(2) and c(10-14). The alpha and beta chains form an alternating ring which encloses part of the gamma chain. F(1) is attached to F(0) by a central stalk formed by the gamma and epsilon chains, while a peripheral stalk is formed by the delta and b chains.

Its subcellular location is the cell inner membrane. Functionally, f(1)F(0) ATP synthase produces ATP from ADP in the presence of a proton or sodium gradient. F-type ATPases consist of two structural domains, F(1) containing the extramembraneous catalytic core and F(0) containing the membrane proton channel, linked together by a central stalk and a peripheral stalk. During catalysis, ATP synthesis in the catalytic domain of F(1) is coupled via a rotary mechanism of the central stalk subunits to proton translocation. Component of the F(0) channel, it forms part of the peripheral stalk, linking F(1) to F(0). The chain is ATP synthase subunit b from Actinobacillus succinogenes (strain ATCC 55618 / DSM 22257 / CCUG 43843 / 130Z).